Reading from the N-terminus, the 381-residue chain is Bifunctional enzyme Fae/Hps (381 aa).

The segment at 1–150 is formaldehyde-activating enzyme; that stretch reads MIKFGEAVLG…KEKYRALHPL (150 aa). Positions 151–381 are 3-hexulose-6-phosphate synthase; the sequence is VGFRDVRLEY…DEDEDIGEEL (231 aa).

In the N-terminal section; belongs to the formaldehyde-activating enzyme family. The protein in the C-terminal section; belongs to the HPS/KGPDC family. HPS subfamily.

The enzyme catalyses 5,6,7,8-tetrahydromethanopterin + formaldehyde = 5,10-methylenetetrahydromethanopterin + H2O. It catalyses the reaction D-ribulose 5-phosphate + formaldehyde = D-arabino-hex-3-ulose 6-phosphate. The protein operates within carbohydrate biosynthesis; D-ribose 5-phosphate biosynthesis. In terms of biological role, catalyzes the condensation of formaldehyde with tetrahydromethanopterin (H(4)MPT) to 5,10-methylenetetrahydromethanopterin. Its function is as follows. Catalyzes the reversible formation of ribulose-5-phosphate and formaldehyde from 3-hexulose-6-phosphate. This Methanocaldococcus jannaschii (strain ATCC 43067 / DSM 2661 / JAL-1 / JCM 10045 / NBRC 100440) (Methanococcus jannaschii) protein is Bifunctional enzyme Fae/Hps.